The sequence spans 61 residues: U-scoloptoxin(14)-Sm1a (61 aa).

A signal peptide spans 1-24 (MNPKLCMLLLVCLMAFYVIETVQA).

This sequence belongs to the scoloptoxin-14 family. Post-translationally, contains 4 disulfide bonds. In terms of tissue distribution, expressed by the venom gland.

It is found in the secreted. This chain is U-scoloptoxin(14)-Sm1a, found in Scolopendra morsitans (Tanzanian blue ringleg centipede).